The following is a 386-amino-acid chain: MYSVLKQSIRPRLLATHNQFRTMITAQAVLYTQHGEPKDVLFTQSFEIDDDNLAPNEVIVKTLGSPINPSDINQIQGVYPSKPAKTTGFGTAEPAAPCGNEGLFEVIKVGSNVSSLEAGDWVIPSHVNFGTWRTHALGNDDDFIKLPNPAQSKANGKPNGLTINQGATISVNPLTAYLMLTHYVKLTPGKDWFIQNGGTSAVGKYASQIGKLLNFNSISVIRDRPNLDEVVASLKELGATQVITEDQNNSKEFGPTIKEWIKQSGGEAKLALNCVGGKSSTGIARKLNNNGLMLTYGGMSFQPVTIPTSLYIFKNFTSAGFWVTELLKNNKELKTSTLNQIIAWYEEGKLTDAKSIETLYDGTKPLHELYQDGVANSKDGKQLITY.

The transit peptide at Met-1–Thr-22 directs the protein to the mitochondrion. Tyr-79 (proton donor) is an active-site residue. NADP(+) is bound by residues Asn-172, Thr-199–Val-202, Arg-222–Arg-224, Tyr-296–Met-299, Phe-321–Val-323, and Lys-381.

This sequence belongs to the zinc-containing alcohol dehydrogenase family. Quinone oxidoreductase subfamily. In terms of assembly, homodimer and heterodimer with ETR1.

The protein localises to the mitochondrion. It carries out the reaction a 2,3-saturated acyl-[ACP] + NADP(+) = a (2E)-enoyl-[ACP] + NADPH + H(+). Its function is as follows. Required for respiration and the maintenance of the mitochondrial compartment. Oxidoreductase with a preference for short and medium chain substrates, including trans-2-hexenoyl-CoA (C6), trans-2-decenoyl-CoA (C10), and trans-2-hexadecenoyl-CoA (C16). May play a role in mitochondrial fatty acid synthesis. In Candida tropicalis (Yeast), this protein is Enoyl-[acyl-carrier-protein] reductase 2, mitochondrial (ETR2).